The chain runs to 343 residues: Palmitoyltransferase ZDHHC4 (343 aa).

The Lumenal segment spans residues methionine 1–aspartate 2. The helical transmembrane segment at phenylalanine 3–isoleucine 23 threads the bilayer. The Cytoplasmic portion of the chain corresponds to glycine 24–threonine 67. Residues phenylalanine 68–phenylalanine 88 traverse the membrane as a helical segment. Over glycine 89–glutamate 95 the chain is Lumenal. A helical transmembrane segment spans residues phenylalanine 96–threonine 116. Residues leucine 117–serine 196 lie on the Cytoplasmic side of the membrane. Residues valine 149–phenylalanine 199 enclose the DHHC domain. Cysteine 179 (S-palmitoyl cysteine intermediate) is an active-site residue. The helical transmembrane segment at tyrosine 197–valine 217 threads the bilayer. Residues arginine 218 to arginine 255 are Lumenal-facing. The helical transmembrane segment at isoleucine 256–phenylalanine 276 threads the bilayer. The Cytoplasmic segment spans residues cysteine 277–lysine 343. The Di-lysine motif signature appears at arginine 340–lysine 343.

This sequence belongs to the DHHC palmitoyltransferase family. In terms of assembly, interacts with CPT1A.

It is found in the endoplasmic reticulum membrane. The protein localises to the golgi apparatus membrane. The protein resides in the cell membrane. The catalysed reaction is L-cysteinyl-[protein] + hexadecanoyl-CoA = S-hexadecanoyl-L-cysteinyl-[protein] + CoA. Palmitoyltransferase that could catalyze the addition of palmitate onto protein substrates including the D(2) dopamine receptor DRD2, GSK3B or MAVS. Mediates GSK3B palmitoylation to prevent its AKT1-mediated phosphorylation leading to activation of the STAT3 signaling pathway. Also catalyzes MAVS palmitoylation which promotes its stabilization and activation by inhibiting 'Lys-48'- but facilitating 'Lys-63'-linked ubiquitination. The chain is Palmitoyltransferase ZDHHC4 from Bos taurus (Bovine).